The chain runs to 877 residues: DNA polymerase I (877 aa).

The 5'-3' exonuclease domain maps to 1–310 (MKKKLVLIDG…FTLADRVTEE (310 aa)). In terms of domain architecture, 3'-5' exonuclease spans 311–465 (MLADKAALVV…ALERPFLDEL (155 aa)). Residues 469-877 (EQDRLLVELE…HYGSTWYDAK (409 aa)) are polymerase.

Belongs to the DNA polymerase type-A family. As to quaternary structure, single-chain monomer with multiple functions.

It catalyses the reaction DNA(n) + a 2'-deoxyribonucleoside 5'-triphosphate = DNA(n+1) + diphosphate. In addition to polymerase activity, this DNA polymerase exhibits 3'-5' and 5'-3' exonuclease activity. The protein is DNA polymerase I (polA) of Bacillus caldotenax.